The following is a 472-amino-acid chain: Nucleoporin NUP49/NSP49 (472 aa).

An FG 1 repeat occupies 2-3; the sequence is FG. The stretch at 14–17 is one GLFG 1 repeat; the sequence is GLFG. Residues 28–104 form a disordered region; it reads NTGFSFGGTQ…TANTGGGLFG (77 aa). The stretch at 33–34 is one FG 2 repeat; sequence FG. Residues 48–51 form a GLFG 2 repeat; that stretch reads GLFG. Low complexity predominate over residues 64–80; the sequence is SFGQQQQQSQTNAFGGS. FG repeat units follow at residues 65–66 and 77–78; these read FG. GLFG repeat units lie at residues 86 to 89 and 101 to 104; these read GLFG. Residues 113–116 form an SLFG 1 repeat; sequence SLFG. GLFG repeat units follow at residues 125–128 and 148–151; these read GLFG. An SLFG 2 repeat occupies 159–162; that stretch reads SLFG. A GLFG 7; approximate repeat occupies 175–178; it reads GMFG. Residues 185-188 form an SLFG 3 repeat; the sequence is SLFG. Residues 199 to 202 form a GLFG 8 repeat; sequence GLFG. The stretch at 210-213 is one SLFG 4 repeat; that stretch reads SLFG. The tract at residues 211-242 is disordered; that stretch reads LFGSSNNNNNNNNSNNIMSASGGLFGNQQQQL. Positions 214-226 are enriched in low complexity; it reads SSNNNNNNNNSNN. Residues 233-236 form a GLFG 9 repeat; sequence GLFG.

It belongs to the nucleoporin GLFG family. As to quaternary structure, component of the nuclear pore complex (NPC). NPC constitutes the exclusive means of nucleocytoplasmic transport. NPCs allow the passive diffusion of ions and small molecules and the active, nuclear transport receptor-mediated bidirectional transport of macromolecules such as proteins, RNAs, ribonucleoparticles (RNPs), and ribosomal subunits across the nuclear envelope. Due to its 8-fold rotational symmetry, all subunits are present with 8 copies or multiples thereof. NUP49 is part of the NUP57 subcomplex (NIC96, NSP1, NUP49, NUP57) interacting with NUP57. Interacts through its FG repeats with karyopherins.

It is found in the nucleus. It localises to the nuclear pore complex. The protein resides in the nucleus membrane. In terms of biological role, functions as a component of the nuclear pore complex (NPC). NPC components, collectively referred to as nucleoporins (NUPs), can play the role of both NPC structural components and of docking or interaction partners for transiently associated nuclear transport factors. Active directional transport is assured by both, a Phe-Gly (FG) repeat affinity gradient for these transport factors across the NPC and a transport cofactor concentration gradient across the nuclear envelope (GSP1 and GSP2 GTPases associated predominantly with GTP in the nucleus, with GDP in the cytoplasm). NUP49 plays an important role in several nuclear transport pathways including poly(A)+ RNA, tRNA, and pre-ribosome transport. This Saccharomyces cerevisiae (strain ATCC 204508 / S288c) (Baker's yeast) protein is Nucleoporin NUP49/NSP49 (NUP49).